The following is a 525-amino-acid chain: GMP synthase [glutamine-hydrolyzing] (525 aa).

A Glutamine amidotransferase type-1 domain is found at 8 to 207 (KILILDFGSQ…ALEICACAAN (200 aa)). C85 (nucleophile) is an active-site residue. Residues H181 and E183 contribute to the active site. The GMPS ATP-PPase domain occupies 208-400 (WKPASIIEDA…LGLPYNMLYR (193 aa)). An ATP-binding site is contributed by 235-241 (SGGVDSS).

In terms of assembly, homodimer.

It carries out the reaction XMP + L-glutamine + ATP + H2O = GMP + L-glutamate + AMP + diphosphate + 2 H(+). Its pathway is purine metabolism; GMP biosynthesis; GMP from XMP (L-Gln route): step 1/1. Functionally, catalyzes the synthesis of GMP from XMP. The sequence is that of GMP synthase [glutamine-hydrolyzing] from Shewanella halifaxensis (strain HAW-EB4).